The sequence spans 49 residues: uncharacterized protein (49 aa).

Residues 23–43 (LYVISFVLFIVLFFGMFFKLI) form a helical membrane-spanning segment.

The protein resides in the host membrane. This is an uncharacterized protein from Spiroplasma melliferum (SpV1).